A 300-amino-acid chain; its full sequence is Inosose dehydratase (300 aa).

This sequence belongs to the IolE/MocC family. The cofactor is glutathione. It depends on Co(2+) as a cofactor. Mn(2+) is required as a cofactor.

The catalysed reaction is scyllo-inosose = 3D-3,5/4-trihydroxycyclohexane-1,2-dione + H2O. In terms of biological role, catalyzes the dehydration of inosose (2-keto-myo-inositol, 2KMI or 2,4,6/3,5-pentahydroxycyclohexanone) to 3D-(3,5/4)-trihydroxycyclohexane-1,2-dione (D-2,3-diketo-4-deoxy-epi-inositol). The chain is Inosose dehydratase from Mesomycoplasma hyopneumoniae (strain J / ATCC 25934 / NCTC 10110) (Mycoplasma hyopneumoniae).